A 171-amino-acid polypeptide reads, in one-letter code: MTQRPERPSEQDGFFWKTKTLEQMSSSEWESLCDGCARCCLEKLEDEDTGDIYFTHVSCRLLDAGLCACKDYANRSEQVSDCVRLTPDNVRTLNWLPPSCGYRLVAEGRDLYWWHPLISGDPNTVHEAGVSVRGRVRGTEDEIPDSELEDHIAQWPVRLPKRAQLKKPPRS.

Belongs to the UPF0260 family.

The chain is UPF0260 protein Nham_1404 from Nitrobacter hamburgensis (strain DSM 10229 / NCIMB 13809 / X14).